Consider the following 346-residue polypeptide: Golgi to ER traffic protein 4 (346 aa).

Residues 317–346 (GQNQGGSRRTPQGRSQSKTVEAPPASMELD) are disordered. The segment covering 321-335 (GGSRRTPQGRSQSKT) has biased composition (polar residues).

This sequence belongs to the GET4 family. As to quaternary structure, component of the get4/get5/sgt2 sorting complex.

It localises to the cytoplasm. In terms of biological role, component of the get4/get5/sgt2 sorting complex involved in the GET (guided entry of TA proteins) pathway that leads to the insertion of tail-anchored (TA) proteins into the endoplasmic reticulum. Get4 and get5 form an obligate complex that catalyzes the transfer of tail-anchored proteins destined to the endoplasmic reticulum from sgt2 to the cytosolic targeting factor which then targets the TA protein to the ER membrane via get1/get2. The protein is Golgi to ER traffic protein 4 of Aspergillus fumigatus (strain ATCC MYA-4609 / CBS 101355 / FGSC A1100 / Af293) (Neosartorya fumigata).